The sequence spans 278 residues: Large ribosomal subunit protein uL2 (278 aa).

2 stretches are compositionally biased toward basic residues: residues 210-220 and 257-278; these read GRMRWKGKRPS and TRRK…NKKR. Positions 210-278 are disordered; the sequence is GRMRWKGKRP…VRRRKSNKKR (69 aa).

The protein belongs to the universal ribosomal protein uL2 family. Part of the 50S ribosomal subunit. Forms a bridge to the 30S subunit in the 70S ribosome.

Its function is as follows. One of the primary rRNA binding proteins. Required for association of the 30S and 50S subunits to form the 70S ribosome, for tRNA binding and peptide bond formation. It has been suggested to have peptidyltransferase activity; this is somewhat controversial. Makes several contacts with the 16S rRNA in the 70S ribosome. This Acidothermus cellulolyticus (strain ATCC 43068 / DSM 8971 / 11B) protein is Large ribosomal subunit protein uL2.